Consider the following 123-residue polypeptide: Large ribosomal subunit protein uL18 (123 aa).

Belongs to the universal ribosomal protein uL18 family. Part of the 50S ribosomal subunit; part of the 5S rRNA/L5/L18/L25 subcomplex. Contacts the 5S and 23S rRNAs.

In terms of biological role, this is one of the proteins that bind and probably mediate the attachment of the 5S RNA into the large ribosomal subunit, where it forms part of the central protuberance. In Bifidobacterium longum (strain DJO10A), this protein is Large ribosomal subunit protein uL18.